The primary structure comprises 81 residues: Conotoxin ArMKLT2-0311 (81 aa).

Positions 1-22 are cleaved as a signal peptide; that stretch reads MKLTCVLIVALLFLTACQLTTA. Residues 23–34 show a composition bias toward basic and acidic residues; sequence DDSRDKQEDPLV. The segment at 23-45 is disordered; the sequence is DDSRDKQEDPLVRSHRKMQKSED. A propeptide spanning residues 23–51 is cleaved from the precursor; the sequence is DDSRDKQEDPLVRSHRKMQKSEDPKMAER. 3 disulfide bridges follow: Cys-52-Cys-67, Cys-59-Cys-71, and Cys-66-Cys-80.

The protein belongs to the conotoxin O1 superfamily. Expressed by the venom duct.

The protein resides in the secreted. This Conus arenatus (Sand-dusted cone) protein is Conotoxin ArMKLT2-0311.